The chain runs to 311 residues: Thioredoxin reductase (311 aa).

Residues 31 to 39 (FEKGMPGGQ) and 32 to 39 (EKGMPGGQ) contribute to the FAD site. Residues Cys133 and Cys136 are joined by a disulfide bond. 281 to 290 (DIRIFAPKQV) is an FAD binding site.

The protein belongs to the class-II pyridine nucleotide-disulfide oxidoreductase family. In terms of assembly, homodimer. FAD is required as a cofactor.

Its subcellular location is the cytoplasm. It catalyses the reaction [thioredoxin]-dithiol + NADP(+) = [thioredoxin]-disulfide + NADPH + H(+). The polypeptide is Thioredoxin reductase (trxB) (Helicobacter pylori (strain J99 / ATCC 700824) (Campylobacter pylori J99)).